Consider the following 419-residue polypeptide: Protein-lysine N-methyltransferase EFM2 (419 aa).

S-adenosyl-L-methionine-binding positions include Trp-222, Gly-261–Gly-263, Asp-290, Trp-318, and Ala-340.

The protein belongs to the class I-like SAM-binding methyltransferase superfamily. METTL21 family.

It localises to the cytoplasm. In terms of biological role, S-adenosyl-L-methionine-dependent protein-lysine N-methyltransferase that mono- and dimethylates elongation factor 2 (EFT1/EFT2) at 'Lys-613' and methylates elongation factor 3A (YEF3). The polypeptide is Protein-lysine N-methyltransferase EFM2 (Saccharomyces cerevisiae (strain ATCC 204508 / S288c) (Baker's yeast)).